The following is a 626-amino-acid chain: Membrane protein insertase YidC (626 aa).

Helical transmembrane passes span 8-28, 399-419, 469-489, 527-547, and 563-583; these read LILA…LFPP, MGLA…PLAY, LPIL…FVTL, SIMA…SMWL, and IFAW…SGLL.

This sequence belongs to the OXA1/ALB3/YidC family. Type 1 subfamily. As to quaternary structure, interacts with the Sec translocase complex via SecD. Specifically interacts with transmembrane segments of nascent integral membrane proteins during membrane integration.

The protein localises to the cell inner membrane. Functionally, required for the insertion and/or proper folding and/or complex formation of integral membrane proteins into the membrane. Involved in integration of membrane proteins that insert both dependently and independently of the Sec translocase complex, as well as at least some lipoproteins. Aids folding of multispanning membrane proteins. The chain is Membrane protein insertase YidC from Jannaschia sp. (strain CCS1).